A 90-amino-acid polypeptide reads, in one-letter code: MTRMVHCIKLDKEAEALDFPPYPGELGKRIYESVSKEAWAAWLKHQTMLVNENRLNLADVRARKYLATQMEKHFFGEGADAAQGYVPPTE.

Belongs to the Fe(2+)-trafficking protein family.

In terms of biological role, could be a mediator in iron transactions between iron acquisition and iron-requiring processes, such as synthesis and/or repair of Fe-S clusters in biosynthetic enzymes. This chain is Probable Fe(2+)-trafficking protein, found in Herminiimonas arsenicoxydans.